Consider the following 311-residue polypeptide: MIDLLIIAGPTAVGKTDISIKLAEKLNGEIISADSMQIYKYMDIGSAKITKDEMKGIPHHLIDVVEPHEEFNVSSFKDLAEKSIKDIWNRGKLPIIAGGTGLYINSLIYNYDFTDADRDEKYREYLTKLAEDKGNEYVHSLLKDIDEESYEKLYPNDLKRVVRALEVYKITGKSISEYIKENEKKLYDIPYNVNYFILNMNREVLYERINKRVDIMMGKGLIEEVKKLESMGYTPDMQSMKGIGYKEVLFYLNGDISLDEAIYLIKKGSRNYAKRQLTWFRKDKRSIWIDKDKYSSEEEIVDKIIKMVKDK.

9–16 lines the ATP pocket; sequence GPTAVGKT. 11–16 contacts substrate; sequence TAVGKT. The interaction with substrate tRNA stretch occupies residues 34 to 37; it reads DSMQ.

This sequence belongs to the IPP transferase family. In terms of assembly, monomer. The cofactor is Mg(2+).

It catalyses the reaction adenosine(37) in tRNA + dimethylallyl diphosphate = N(6)-dimethylallyladenosine(37) in tRNA + diphosphate. In terms of biological role, catalyzes the transfer of a dimethylallyl group onto the adenine at position 37 in tRNAs that read codons beginning with uridine, leading to the formation of N6-(dimethylallyl)adenosine (i(6)A). The chain is tRNA dimethylallyltransferase from Clostridium botulinum (strain Okra / Type B1).